A 202-amino-acid chain; its full sequence is MSRYRGPRMKMIRRPGTLPGLTSKTPGTKVGSSDRSTSSKKISQYRIRLEEKQKLRLHYGLTERQLLKYVFTARGAKGSTGQLLLQLLEMRLDNTIFRLGIVPTIPAARQLVNHRHVSINEHIIDIPSYNCKPGDVITINNREKCRLVDRRDMNSLQKPEIPNHLTFDSKEFLGSVQQIIDRDWIDLKINELLVVEYYSRRV.

Residues 1–13 show a composition bias toward basic residues; sequence MSRYRGPRMKMIR. A disordered region spans residues 1 to 41; the sequence is MSRYRGPRMKMIRRPGTLPGLTSKTPGTKVGSSDRSTSSKK. The segment covering 29–41 has biased composition (low complexity); sequence KVGSSDRSTSSKK. Positions 90 to 153 constitute an S4 RNA-binding domain; that stretch reads MRLDNTIFRL…KCRLVDRRDM (64 aa).

Belongs to the universal ribosomal protein uS4 family. In terms of assembly, part of the 30S ribosomal subunit. Contacts protein S5. The interaction surface between S4 and S5 is involved in control of translational fidelity.

Its subcellular location is the plastid. In terms of biological role, one of the primary rRNA binding proteins, it binds directly to 16S rRNA where it nucleates assembly of the body of the 30S subunit. Its function is as follows. With S5 and S12 plays an important role in translational accuracy. This is Small ribosomal subunit protein uS4c (rps4) from Aneura mirabilis (Parasitic liverwort).